A 360-amino-acid chain; its full sequence is Photosystem II protein D1 (360 aa).

The next 3 membrane-spanning stretches (helical) occupy residues 29 to 46 (YIGW…TATT), 118 to 133 (HFLL…QWEL), and 142 to 156 (WICV…AATA). Histidine 118 serves as a coordination point for chlorophyll a. Tyrosine 126 is a pheophytin a binding site. [CaMn4O5] cluster-binding residues include aspartate 170 and glutamate 189. The chain crosses the membrane as a helical span at residues 197–218 (FHMLGVAGVFGGSLFSAMHGSL). Position 198 (histidine 198) interacts with chlorophyll a. A quinone-binding positions include histidine 215 and 264 to 265 (SF). Fe cation is bound at residue histidine 215. Histidine 272 contacts Fe cation. A helical transmembrane segment spans residues 274–288 (FLGAWPVIGIWFTAM). Residues histidine 332, glutamate 333, aspartate 342, and alanine 344 each contribute to the [CaMn4O5] cluster site. The propeptide occupies 345–360 (SGEQAPVALIAPAING).

It belongs to the reaction center PufL/M/PsbA/D family. As to quaternary structure, PSII is composed of 1 copy each of membrane proteins PsbA, PsbB, PsbC, PsbD, PsbE, PsbF, PsbH, PsbI, PsbJ, PsbK, PsbL, PsbM, PsbT, PsbX, PsbY, PsbZ, Psb30/Ycf12, peripheral proteins PsbO, CyanoQ (PsbQ), PsbU, PsbV and a large number of cofactors. It forms dimeric complexes. It depends on The D1/D2 heterodimer binds P680, chlorophylls that are the primary electron donor of PSII, and subsequent electron acceptors. It shares a non-heme iron and each subunit binds pheophytin, quinone, additional chlorophylls, carotenoids and lipids. D1 provides most of the ligands for the Mn4-Ca-O5 cluster of the oxygen-evolving complex (OEC). There is also a Cl(-1) ion associated with D1 and D2, which is required for oxygen evolution. The PSII complex binds additional chlorophylls, carotenoids and specific lipids. as a cofactor. In terms of processing, tyr-161 forms a radical intermediate that is referred to as redox-active TyrZ, YZ or Y-Z. Post-translationally, C-terminally processed by CtpA; processing is essential to allow assembly of the oxygen-evolving complex and thus photosynthetic growth.

The protein resides in the cellular thylakoid membrane. It carries out the reaction 2 a plastoquinone + 4 hnu + 2 H2O = 2 a plastoquinol + O2. In terms of biological role, photosystem II (PSII) is a light-driven water:plastoquinone oxidoreductase that uses light energy to abstract electrons from H(2)O, generating O(2) and a proton gradient subsequently used for ATP formation. It consists of a core antenna complex that captures photons, and an electron transfer chain that converts photonic excitation into a charge separation. The D1/D2 (PsbA/PsbD) reaction center heterodimer binds P680, the primary electron donor of PSII as well as several subsequent electron acceptors. In Microcystis aeruginosa (strain NIES-843 / IAM M-2473), this protein is Photosystem II protein D1.